The primary structure comprises 924 residues: Cell division control protein 13 (924 aa).

The segment at 265–336 (PTTDISNMGE…KRKRKLSFHS (72 aa)) is disordered. A compositionally biased stretch (polar residues) spans 295–308 (GKYFSSKSYIQSQT). Residue Ser-306 is modified to Phosphoserine. Thr-308 carries the phosphothreonine modification. Residues 309–326 (PERKTSVPNNWHDDDSGS) show a composition bias toward basic and acidic residues. Ser-333 carries the post-translational modification Phosphoserine. The OB DNA-binding region spans 500-686 (KMARKDPTIE…FEEYRRFFPI (187 aa)).

In terms of assembly, interacts with POL1, EST1, FUN12, STM1, STN1 and TEN1.

Its subcellular location is the chromosome. The protein resides in the telomere. Its function is as follows. Single-stranded telomeric DNA-binding protein that regulates telomere replication. Has a role in both positive and negative regulation. Promotes [TG(1-3)] strand lengthening via interaction with EST1. Promotes [C(1-3)A] strand re-synthesis by DNA polymerase alpha via interaction with POL1. Negatively regulates telomere elongation of the G strand via binding with STN1 thereby inhibiting telomerase activity. The polypeptide is Cell division control protein 13 (CDC13) (Saccharomyces cerevisiae (strain ATCC 204508 / S288c) (Baker's yeast)).